The primary structure comprises 780 residues: Protein SEY1 (780 aa).

At 1 to 680 (MDSKEEAIQL…KRSMIKTTTH (680 aa)) the chain is on the cytoplasmic side. The GB1/RHD3-type G domain occupies 35 to 265 (GVNYHVISVF…NEDYYFKPEY (231 aa)). 45–52 (GSQSSGKS) contacts GTP. A coiled-coil region spans residues 440-463 (EVKEEVVKRFENDLKETSDKLRVT). The helical transmembrane segment at 681-701 (IPLWIYAIIVVLGWNEFMMVI) threads the bilayer. The Lumenal segment spans residues 702–704 (RNP). The helical transmembrane segment at 705–725 (LFVTLTILILVSFYFINKFDL) threads the bilayer. Residues 726 to 780 (WGPVKSVAQTAAGETIGTIKTKLRDFVLEEHEKTPKIQSEKSNSDSEKVVENEKS) lie on the Cytoplasmic side of the membrane. Residues 756–780 (HEKTPKIQSEKSNSDSEKVVENEKS) are disordered.

The protein belongs to the TRAFAC class dynamin-like GTPase superfamily. GB1/RHD3 GTPase family. RHD3 subfamily.

The protein resides in the endoplasmic reticulum membrane. Cooperates with the reticulon proteins and tubule-shaping DP1 family proteins to generate and maintain the structure of the tubular endoplasmic reticulum network. Has GTPase activity, which is required for its function in ER organization. This is Protein SEY1 from Vanderwaltozyma polyspora (strain ATCC 22028 / DSM 70294 / BCRC 21397 / CBS 2163 / NBRC 10782 / NRRL Y-8283 / UCD 57-17) (Kluyveromyces polysporus).